A 236-amino-acid polypeptide reads, in one-letter code: 2-C-methyl-D-erythritol 4-phosphate cytidylyltransferase (236 aa).

The protein belongs to the IspD/TarI cytidylyltransferase family. IspD subfamily. In terms of assembly, homodimer.

The enzyme catalyses 2-C-methyl-D-erythritol 4-phosphate + CTP + H(+) = 4-CDP-2-C-methyl-D-erythritol + diphosphate. Its pathway is isoprenoid biosynthesis; isopentenyl diphosphate biosynthesis via DXP pathway; isopentenyl diphosphate from 1-deoxy-D-xylulose 5-phosphate: step 2/6. Catalyzes the formation of 4-diphosphocytidyl-2-C-methyl-D-erythritol from CTP and 2-C-methyl-D-erythritol 4-phosphate (MEP). This is 2-C-methyl-D-erythritol 4-phosphate cytidylyltransferase from Salmonella paratyphi C (strain RKS4594).